We begin with the raw amino-acid sequence, 85 residues long: Putative regulatory protein Dtur_1444 (85 aa).

Belongs to the RemA family.

The sequence is that of Putative regulatory protein Dtur_1444 from Dictyoglomus turgidum (strain DSM 6724 / Z-1310).